A 371-amino-acid chain; its full sequence is Chitin deacetylase (371 aa).

The first 20 residues, 1-20 (MLCRLFTLFITAALACCVAA), serve as a signal peptide directing secretion. The tract at residues 73–112 (PKPEPEPTAVPTMAPEPTTVPPTEPSGTYPPETTPTVEPT) is disordered. Low complexity-rich tracts occupy residues 79 to 89 (PTAVPTMAPEP) and 102 to 112 (PPETTPTVEPT). C164 and C358 are disulfide-bonded. A glycan (N-linked (GlcNAc...) asparagine) is linked at N167. The region spanning 168–353 (GTIALTFDDG…EIKKRGLRAV (186 aa)) is the NodB homology domain. D175 functions as the Proton acceptor in the catalytic mechanism. Acetate is bound at residue D175. D176, H228, and H232 together coordinate Co(2+). N239 carries an N-linked (GlcNAc...) asparagine glycan. Y270 lines the acetate pocket. H327 serves as the catalytic Proton donor.

It belongs to the polysaccharide deacetylase family. Co(2+) is required as a cofactor.

It catalyses the reaction [(1-&gt;4)-N-acetyl-beta-D-glucosaminyl](n) + n H2O = chitosan + n acetate. In terms of biological role, hydrolyzes the N-acetamido groups of N-acetyl-D-glucosamine residues in chitin to form chitosan and acetate. In Arthroderma benhamiae (strain ATCC MYA-4681 / CBS 112371) (Trichophyton mentagrophytes), this protein is Chitin deacetylase.